A 332-amino-acid polypeptide reads, in one-letter code: MNAKHAPFRHYLDLADARLGSQVVAVSDEWFAPASRMLQAGEPVWKEGVFDDSGKWMDGWETRRKRFEGHDQAVIRLGVPGVLKGVDIDTRFFTGNHPPAASLDGCFCTEGDPDDSTSWSEVLPAVGLQGDSHHYHPIDDERPWTHLRLNIYPDGGIARLRLYGVPYRDWSSLPPGTALDLAAAVNGGRALACSDQHFGRMGNLLNPGRAINMGDGWETGRRRTPGHDWVIVALGHPGSIEAAVVDTLHFKGNYPESCSIQAAFVEGGNEARIEAQSLFWRELLPAQKLEMHQEHRFERHLNALGPITHVRLNIFPDGGVSRLRLFGSPQLP.

This sequence belongs to the allantoicase family.

It carries out the reaction allantoate + H2O = (S)-ureidoglycolate + urea. The protein operates within nitrogen metabolism; (S)-allantoin degradation; (S)-ureidoglycolate from allantoate (aminidohydrolase route): step 1/1. This is Probable allantoicase from Pseudomonas aeruginosa (strain UCBPP-PA14).